Consider the following 129-residue polypeptide: Photosystem II extrinsic protein V (129 aa).

Residues Cys35, Cys38, His39, and His90 each contribute to the heme c site.

It belongs to the cytochrome c family. PsbV subfamily. In terms of assembly, PSII is composed of 1 copy each of membrane proteins PsbA, PsbB, PsbC, PsbD, PsbE, PsbF, PsbH, PsbI, PsbJ, PsbK, PsbL, PsbM, PsbT, PsbX, PsbY, PsbZ, Psb30/Ycf12, peripheral proteins PsbO, CyanoQ (PsbQ), PsbU, PsbV and a large number of cofactors. It forms dimeric complexes. Homodimer in crystal structure. Requires heme c as cofactor.

It localises to the cellular thylakoid membrane. Its function is as follows. One of the extrinsic, lumenal subunits of photosystem II (PSII). PSII is a light-driven water plastoquinone oxidoreductase, using light energy to abstract electrons from H(2)O, generating a proton gradient subsequently used for ATP formation. The extrinsic proteins stabilize the structure of photosystem II oxygen-evolving complex (OEC), the ion environment of oxygen evolution and protect the OEC against heat-induced inactivation. Low-potential cytochrome c that plays a role in the OEC of PSII. This Limnospira maxima (Arthrospira maxima) protein is Photosystem II extrinsic protein V.